Here is a 260-residue protein sequence, read N- to C-terminus: UPF0246 protein APJL_0596 (260 aa).

The protein belongs to the UPF0246 family.

The polypeptide is UPF0246 protein APJL_0596 (Actinobacillus pleuropneumoniae serotype 3 (strain JL03)).